The sequence spans 186 residues: Heat shock protein 23 (186 aa).

A sHSP domain is found at 53–161 (VGASSGSSGA…KGNERIVQIQ (109 aa)). The disordered stretch occupies residues 163 to 186 (VGPAHLNVKENPKEAVEQDNGNDK). Residues 169–186 (NVKENPKEAVEQDNGNDK) show a composition bias toward basic and acidic residues.

This sequence belongs to the small heat shock protein (HSP20) family.

The chain is Heat shock protein 23 (Hsp23) from Drosophila melanogaster (Fruit fly).